The primary structure comprises 382 residues: uncharacterized protein (382 aa).

Transmembrane regions (helical) follow at residues Gly14 to Ala34, Val45 to Ile65, Tyr75 to Trp95, Phe102 to Ser122, Leu131 to Ser151, Leu157 to Phe177, Val206 to Phe226, Ala235 to Ile255, Val270 to Pro290, Ala291 to Cys311, Ala325 to Met345, and Phe348 to Leu368.

The protein belongs to the major facilitator superfamily. YcaD (TC 2.A.1.26) family.

The protein localises to the cell inner membrane. This is an uncharacterized protein from Escherichia coli O17:K52:H18 (strain UMN026 / ExPEC).